The primary structure comprises 157 residues: Probable succinate transporter subunit YjjB (157 aa).

Helical transmembrane passes span 15–35 (ILAA…VQAL), 50–70 (MILM…SMLV), 87–107 (VFTV…TAMI), and 121–141 (LMIT…ALSV).

This sequence belongs to the ThrE exporter (TC 2.A.79) family. The transporter is composed of YjjB and YjjP.

It localises to the cell inner membrane. Its function is as follows. Involved in succinate export with YjjP. Both proteins are required for export. The polypeptide is Probable succinate transporter subunit YjjB (Shigella dysenteriae serotype 1 (strain Sd197)).